Here is a 357-residue protein sequence, read N- to C-terminus: Protein RecA (357 aa).

74–81 (GPESSGKT) serves as a coordination point for ATP.

It belongs to the RecA family.

Its subcellular location is the cytoplasm. In terms of biological role, can catalyze the hydrolysis of ATP in the presence of single-stranded DNA, the ATP-dependent uptake of single-stranded DNA by duplex DNA, and the ATP-dependent hybridization of homologous single-stranded DNAs. It interacts with LexA causing its activation and leading to its autocatalytic cleavage. This chain is Protein RecA, found in Bordetella petrii (strain ATCC BAA-461 / DSM 12804 / CCUG 43448).